A 296-amino-acid polypeptide reads, in one-letter code: Factor associated with metabolism and energy (296 aa).

The N-myristoyl glycine moiety is linked to residue glycine 2. 2 stretches are compositionally biased toward basic and acidic residues: residues 173–187 (SLHG…SPRD) and 267–281 (EQGK…LVRT). 2 disordered regions span residues 173–204 (SLHG…DDHD) and 256–281 (LLWD…LVRT).

Its subcellular location is the cell membrane. The protein resides in the cytoplasmic vesicle. In terms of biological role, may be involved in tuning the metabolism, energy expenditure, and excretion processes. The sequence is that of Factor associated with metabolism and energy from Homo sapiens (Human).